The sequence spans 346 residues: Inner membrane protein YnjI (346 aa).

The Periplasmic segment spans residues 1–38 (MKKVLLQNHPGSEKYSFNGWEIFNSNFERMIKENKAML). Residues 39–59 (LCKWGFYLTCVVAVMFVFAAI) form a helical membrane-spanning segment. Over 60–68 (TSNGLNERG) the chain is Cytoplasmic. The helical transmembrane segment at 69–89 (LITAGCSFLYLLIMMGLIVRA) threads the bilayer. Residues 90 to 234 (GFKAKKEQLH…DCANHSSGKS (145 aa)) are Periplasmic-facing. Residues 235–255 (SAKLIWAAELSWMISISSTAF) traverse the membrane as a helical segment. Over 256-346 (QNGTIEEELA…PWGASSVKYS (91 aa)) the chain is Cytoplasmic.

The protein resides in the cell inner membrane. The sequence is that of Inner membrane protein YnjI (ynjI) from Escherichia coli (strain K12).